The following is a 391-amino-acid chain: cAMP-dependent protein kinase regulatory subunit (391 aa).

Residues 1 to 84 (MFKSPFGANA…PPNPESYPAQ (84 aa)) are disordered. Residues 1 to 131 (MFKSPFGANA…RLKTAIAGNF (131 aa)) are dimerization and phosphorylation. Positions 38–55 (TVTSPTSPNFGMNAQSMF) are enriched in polar residues. Phosphoserine is present on Ser-92. 3',5'-cyclic AMP contacts are provided by residues 132-261 (LFSH…FLRE), Glu-210, Arg-219, 264-381 (LLQT…DIKT), Glu-331, and Arg-340.

It belongs to the cAMP-dependent kinase regulatory chain family. Tetramer, composed of 2 regulatory (R) and 2 catalytic (C) subunits. In the presence of cAMP it dissociates into 2 active monomeric C subunits and an R dimer.

This Colletotrichum orbiculare (strain 104-T / ATCC 96160 / CBS 514.97 / LARS 414 / MAFF 240422) (Cucumber anthracnose fungus) protein is cAMP-dependent protein kinase regulatory subunit (PKAR).